The following is a 233-amino-acid chain: Upstream activation factor subunit spp27 (233 aa).

One can recognise a DEK-C domain in the interval 1 to 53 (MEEYETDIKQILGTVDRQTVSAKQVRQLLEERRKVDLSAHKKDLNALILKCFD). Disordered stretches follow at residues 55–122 (TAAP…KPMK) and 194–233 (IPDD…ESTA). An SWIB/MDM2 domain is found at 116-193 (PLNKPMKLSP…NKYLTNLMTK (78 aa)). Residues 194–208 (IPDDQLPKPQPKNEE) are compositionally biased toward basic and acidic residues.

In terms of assembly, component of the UAF (upstream activation factor) complex which consists of spp27/uaf30, rrn5, rrn10, and histones H3 and H4. Interacts with rrn10.

The protein resides in the cytoplasm. It localises to the nucleus. In terms of biological role, component of the UAF (upstream activation factor) complex which interacts with the upstream element of the RNA polymerase I promoter and forms a stable preinitiation complex. UAF seems to stimulate basal transcription to a fully activated level. The protein is Upstream activation factor subunit spp27 (spp27) of Schizosaccharomyces pombe (strain 972 / ATCC 24843) (Fission yeast).